Consider the following 129-residue polypeptide: Small ribosomal subunit protein uS11 (129 aa).

Positions isoleucine 107 to valine 129 are disordered.

It belongs to the universal ribosomal protein uS11 family. Part of the 30S ribosomal subunit.

Its function is as follows. Located on the platform of the 30S subunit. This is Small ribosomal subunit protein uS11 from Methanoculleus marisnigri (strain ATCC 35101 / DSM 1498 / JR1).